We begin with the raw amino-acid sequence, 120 residues long: Large ribosomal subunit protein uL18 (120 aa).

The protein belongs to the universal ribosomal protein uL18 family. Part of the 50S ribosomal subunit; part of the 5S rRNA/L5/L18/L25 subcomplex. Contacts the 5S and 23S rRNAs.

Functionally, this is one of the proteins that bind and probably mediate the attachment of the 5S RNA into the large ribosomal subunit, where it forms part of the central protuberance. The protein is Large ribosomal subunit protein uL18 of Bartonella henselae (strain ATCC 49882 / DSM 28221 / CCUG 30454 / Houston 1) (Rochalimaea henselae).